The sequence spans 340 residues: 4-hydroxythreonine-4-phosphate dehydrogenase (340 aa).

Positions 141 and 142 each coordinate substrate. Residues His-177, His-222, and His-277 each coordinate a divalent metal cation. Residues Lys-285, Asn-294, and Arg-303 each coordinate substrate.

This sequence belongs to the PdxA family. In terms of assembly, homodimer. Zn(2+) is required as a cofactor. Mg(2+) serves as cofactor. The cofactor is Co(2+).

Its subcellular location is the cytoplasm. It carries out the reaction 4-(phosphooxy)-L-threonine + NAD(+) = 3-amino-2-oxopropyl phosphate + CO2 + NADH. The protein operates within cofactor biosynthesis; pyridoxine 5'-phosphate biosynthesis; pyridoxine 5'-phosphate from D-erythrose 4-phosphate: step 4/5. Functionally, catalyzes the NAD(P)-dependent oxidation of 4-(phosphooxy)-L-threonine (HTP) into 2-amino-3-oxo-4-(phosphooxy)butyric acid which spontaneously decarboxylates to form 3-amino-2-oxopropyl phosphate (AHAP). The protein is 4-hydroxythreonine-4-phosphate dehydrogenase of Maricaulis maris (strain MCS10) (Caulobacter maris).